A 220-amino-acid chain; its full sequence is Adenylate kinase (220 aa).

10–15 (GSGKST) lines the ATP pocket. The tract at residues 30 to 59 (SSGDLIRKEIAEGTPLGREMQAYLARGDLI) is NMP. AMP contacts are provided by residues serine 31, arginine 36, 57–59 (DLI), 83–86 (GYPR), and glutamine 90. The interval 124–161 (GRRICPKCGAVYHVEFNPPKIPGRCDVCGAELVQREDD) is LID. Arginine 125 contacts ATP. The Zn(2+) site is built by cysteine 128 and cysteine 131. 134-135 (VY) serves as a coordination point for ATP. Zn(2+)-binding residues include cysteine 148 and cysteine 151. 2 residues coordinate AMP: arginine 158 and arginine 169. ATP is bound at residue glycine 197.

It belongs to the adenylate kinase family. In terms of assembly, monomer.

It is found in the cytoplasm. The catalysed reaction is AMP + ATP = 2 ADP. Its pathway is purine metabolism; AMP biosynthesis via salvage pathway; AMP from ADP: step 1/1. Functionally, catalyzes the reversible transfer of the terminal phosphate group between ATP and AMP. Plays an important role in cellular energy homeostasis and in adenine nucleotide metabolism. The polypeptide is Adenylate kinase (Pyrococcus furiosus (strain ATCC 43587 / DSM 3638 / JCM 8422 / Vc1)).